A 385-amino-acid polypeptide reads, in one-letter code: Homoserine O-succinyltransferase (385 aa).

One can recognise an AB hydrolase-1 domain in the interval 46-355 (NAILICHALS…NSQHGHDAFL (310 aa)). Catalysis depends on Ser-151, which acts as the Nucleophile. Substrate is bound at residue Arg-221. Active-site residues include Asp-318 and His-351. Asp-352 contacts substrate.

This sequence belongs to the AB hydrolase superfamily. MetX family. Homodimer.

It localises to the cytoplasm. It carries out the reaction L-homoserine + succinyl-CoA = O-succinyl-L-homoserine + CoA. Its pathway is amino-acid biosynthesis; L-methionine biosynthesis via de novo pathway; O-succinyl-L-homoserine from L-homoserine: step 1/1. Its function is as follows. Transfers a succinyl group from succinyl-CoA to L-homoserine, forming succinyl-L-homoserine. This chain is Homoserine O-succinyltransferase, found in Hydrogenovibrio crunogenus (strain DSM 25203 / XCL-2) (Thiomicrospira crunogena).